A 142-amino-acid polypeptide reads, in one-letter code: Ribonuclease VapC44 (142 aa).

Positions 4-126 constitute a PINc domain; it reads LLDVNVLLAL…GRFVTFDQSI (123 aa). Mg(2+) is bound by residues aspartate 6 and aspartate 105.

Belongs to the PINc/VapC protein family. Requires Mg(2+) as cofactor.

In terms of biological role, toxic component of a type II toxin-antitoxin (TA) system. An RNase. Its cognate antitoxin is VapB44. The sequence is that of Ribonuclease VapC44 from Mycobacterium tuberculosis (strain CDC 1551 / Oshkosh).